Reading from the N-terminus, the 252-residue chain is Transcriptional regulatory protein HptR (252 aa).

Residues 3 to 118 (KVVICDDERI…QLEVILGRLV (116 aa)) form the Response regulatory domain. Position 55 is a 4-aspartylphosphate (D55). The region spanning 153-250 (NQIVDQIKQS…QMSPSDYCKQ (98 aa)) is the HTH araC/xylS-type domain. 2 DNA-binding regions (H-T-H motif) span residues 170–191 (SDLI…KDHV) and 217–240 (HYEI…KKYL).

In terms of processing, phosphorylated by HptS.

Its subcellular location is the cytoplasm. Member of the two-component regulatory system HptS/HptR that regulates genes involved in hexose phosphate transport system in response to changes in extracellular phosphate sources. Activates uhpT expression to facilitate glucose-6-phosphate/G6P utilization by directly binding to its promoter. Antagonizes CcpA-dependent transcription of a subset of CcpA-regulated genes involved in antibiotic susceptibility. This chain is Transcriptional regulatory protein HptR (hptR), found in Staphylococcus aureus (strain NCTC 8325 / PS 47).